Here is a 236-residue protein sequence, read N- to C-terminus: Uridylate kinase (236 aa).

10-13 (KLSG) lines the ATP pocket. Residues 18–23 (GEDGYG) are involved in allosteric activation by GTP. UMP is bound at residue Gly52. The ATP site is built by Gly53 and Arg57. Residues Asp72 and 133–140 (TGNPYFTT) contribute to the UMP site. ATP contacts are provided by Thr160, Tyr166, and Asp169.

It belongs to the UMP kinase family. As to quaternary structure, homohexamer.

It localises to the cytoplasm. It catalyses the reaction UMP + ATP = UDP + ADP. It participates in pyrimidine metabolism; CTP biosynthesis via de novo pathway; UDP from UMP (UMPK route): step 1/1. Its activity is regulated as follows. Allosterically activated by GTP. Inhibited by UTP. Functionally, catalyzes the reversible phosphorylation of UMP to UDP. This chain is Uridylate kinase, found in Chlorobium phaeobacteroides (strain DSM 266 / SMG 266 / 2430).